Reading from the N-terminus, the 291-residue chain is Protein-export membrane protein SecF (291 aa).

The next 6 membrane-spanning stretches (helical) occupy residues 19-39, 134-154, 156-176, 187-209, 226-246, and 256-278; these read LVVIPLIILAVALLIIASWYV, LALGGVGVAFLGMSVLVFLMF, VFVPSIAVVVSAFSDIAISVA, LGTVAALLMIIGYSVDSDILLNN, MRTGVTMTLTSIIAMSVMAAV, and AAIGTVLVFGLIADLMNTYLLNL.

This sequence belongs to the SecD/SecF family. SecF subfamily. As to quaternary structure, part of the protein translocation apparatus. Forms a complex with SecD.

The protein localises to the cell membrane. Functionally, involved in protein export. This Haloquadratum walsbyi (strain DSM 16790 / HBSQ001) protein is Protein-export membrane protein SecF.